Consider the following 705-residue polypeptide: Elongation factor G (705 aa).

A tr-type G domain is found at 8–289 (VNYRNIGISA…TVINYLPSPK (282 aa)). GTP is bound by residues 17–24 (AHIDAGKT), 88–92 (DTPGH), and 142–145 (NKMD).

This sequence belongs to the TRAFAC class translation factor GTPase superfamily. Classic translation factor GTPase family. EF-G/EF-2 subfamily.

The protein resides in the cytoplasm. Its function is as follows. Catalyzes the GTP-dependent ribosomal translocation step during translation elongation. During this step, the ribosome changes from the pre-translocational (PRE) to the post-translocational (POST) state as the newly formed A-site-bound peptidyl-tRNA and P-site-bound deacylated tRNA move to the P and E sites, respectively. Catalyzes the coordinated movement of the two tRNA molecules, the mRNA and conformational changes in the ribosome. This is Elongation factor G from Wigglesworthia glossinidia brevipalpis.